Here is a 145-residue protein sequence, read N- to C-terminus: Basic phospholipase A2 PC10 (145 aa).

The first 21 residues, 1–21, serve as a signal peptide directing secretion; that stretch reads MYPAHLLLLLAVCVSLLGASA. The propeptide occupies 22–27; that stretch reads IPPLPL. Intrachain disulfides connect cysteine 38–cysteine 98, cysteine 54–cysteine 144, cysteine 56–cysteine 72, cysteine 71–cysteine 125, cysteine 78–cysteine 118, cysteine 87–cysteine 111, and cysteine 105–cysteine 116. Residues tyrosine 55, glycine 57, and glycine 59 each coordinate Ca(2+). Histidine 75 is a catalytic residue. Aspartate 76 contacts Ca(2+). Aspartate 119 is a catalytic residue.

The protein belongs to the phospholipase A2 family. Group I subfamily. D49 sub-subfamily. The cofactor is Ca(2+).

Its subcellular location is the secreted. The enzyme catalyses a 1,2-diacyl-sn-glycero-3-phosphocholine + H2O = a 1-acyl-sn-glycero-3-phosphocholine + a fatty acid + H(+). Functionally, PLA2 catalyzes the calcium-dependent hydrolysis of the 2-acyl groups in 3-sn-phosphoglycerides. This chain is Basic phospholipase A2 PC10, found in Laticauda laticaudata (Blue-ringed sea krait).